A 1547-amino-acid chain; its full sequence is Tubby-related protein 4 (1547 aa).

3 WD repeats span residues 80–119 (GHNS…WSVE), 123–162 (DRGA…HWSS), and 165–204 (NLES…LAHV). Residues 364-414 (ALYVVRVEHRVSSLQLLCQQAIASTLREDKDVNKLTLPPRLCSYLSTAFIP) form the SOCS box domain. The segment at 530–580 (SPKISRSSKSPKLPRISIEARKSPKLPRAAQEISRSPRLPMRKPSMGSPSL) is disordered. Positions 533-546 (ISRSSKSPKLPRIS) are enriched in low complexity. Position 577 is a phosphoserine (Ser-577). An asymmetric dimethylarginine mark is found at Arg-949 and Arg-954. Ser-1347 and Ser-1378 each carry phosphoserine. The interval 1374-1414 (SLISSPRLGREKKKVKSQKDQLKSKKLNKTNEFQDSSESEP) is disordered. Positions 1436 to 1547 (SKRSLRTASE…ALANVTQRLK (112 aa)) are TUB.

It belongs to the TUB family.

The protein localises to the cytoplasm. Its pathway is protein modification; protein ubiquitination. In terms of biological role, may be a substrate-recognition component of a SCF-like ECS (Elongin-Cullin-SOCS-box protein) E3 ubiquitin ligase complex which mediates the ubiquitination and subsequent proteasomal degradation of target proteins. The protein is Tubby-related protein 4 (Tulp4) of Mus musculus (Mouse).